Consider the following 590-residue polypeptide: MNIYKRLKQDIDVVATSIINKLKSTSDSKKFDSLNDTIPIVLESSKDVNSYDISTNIAMLIAKKMNQNSITLANLFKKKLSHYPYIANITIAGPGFINFVILQEAWTNYLAIILDGSYRKEYSSIGNNKKVNIEYVSANPTGPLHIGHARAAVYGDVLATLLQCTGYQVTREYYVNDTGVQIDNLSKSVYLRYKQAITGQAADIPKGLYPGEYLISVGTNLAEEYGDKLLTLSEPEYLNIIKDVAVNNLLQSIKADLALIGVRHDVFFSEKKLHDSNVISKVIDLLSVKKLVYTGKLSQPKGQSSDNWQPRSQLLFKSTIFGDDQDRPLQKEDGSWSYFASDIAYADNKIKRGFDYVIFILGADHIGYVSRIKAIIQALDSNQDVTLDIKICQLVKLIEDGVAVKMSKRSGSFTTIRDVYETVGKDVIRFFMLTRKNNAVLDFDLVKLQEQSRDNPVFYVQYAYVRAGSILRKAKDNANIAYEIFSTNKSDFSLLSTKEELNLIKILAVWSHMLDGAVKNFEPHRIAIYLQKLAAEFHALWNLKSRDLDYRFIVLNDNNLTAARLALATAVREIIREGLKIIGITCVEVM.

Positions 138–148 (ANPTGPLHIGH) match the 'HIGH' region motif.

This sequence belongs to the class-I aminoacyl-tRNA synthetase family. In terms of assembly, monomer.

It is found in the cytoplasm. It carries out the reaction tRNA(Arg) + L-arginine + ATP = L-arginyl-tRNA(Arg) + AMP + diphosphate. The protein is Arginine--tRNA ligase of Orientia tsutsugamushi (strain Ikeda) (Rickettsia tsutsugamushi).